The sequence spans 209 residues: Large ribosomal subunit protein bL25 (209 aa).

Disordered regions lie at residues 1–20 (MSKS…KGSS) and 190–209 (LDVS…TQTS). Over residues 8-20 (KAEKRERVGKGSS) the composition is skewed to basic and acidic residues. Residues 192–209 (VSDETSEQEKDEGETQTS) show a composition bias toward acidic residues.

Belongs to the bacterial ribosomal protein bL25 family. CTC subfamily. As to quaternary structure, part of the 50S ribosomal subunit; part of the 5S rRNA/L5/L18/L25 subcomplex. Contacts the 5S rRNA. Binds to the 5S rRNA independently of L5 and L18.

Functionally, this is one of the proteins that binds to the 5S RNA in the ribosome where it forms part of the central protuberance. The chain is Large ribosomal subunit protein bL25 from Bartonella tribocorum (strain CIP 105476 / IBS 506).